A 437-amino-acid chain; its full sequence is GTPase Der (437 aa).

2 EngA-type G domains span residues 4–167 (PVVA…AEKD) and 175–352 (IRFS…DHQH). Residues 10–17 (GRPNVGKS), 57–61 (DTGGI), 119–122 (NKVD), 181–188 (GRPNVGKS), 229–233 (DTAGI), and 294–297 (NKWD) each bind GTP. Positions 353–437 (RRIQSAVLND…PIRLIKRRRK (85 aa)) constitute a KH-like domain.

This sequence belongs to the TRAFAC class TrmE-Era-EngA-EngB-Septin-like GTPase superfamily. EngA (Der) GTPase family. As to quaternary structure, associates with the 50S ribosomal subunit.

GTPase that plays an essential role in the late steps of ribosome biogenesis. The sequence is that of GTPase Der from Limosilactobacillus fermentum (strain NBRC 3956 / LMG 18251) (Lactobacillus fermentum).